A 389-amino-acid chain; its full sequence is Dihydroorotase (389 aa).

Zn(2+)-binding residues include H51 and H53. Substrate is bound by residues 53–55 (HVR) and N85. Positions 133, 158, 193, and 256 each coordinate Zn(2+). The residue at position 133 (K133) is an N6-carboxylysine. Residue D256 is part of the active site. Substrate is bound by residues H260 and 274–275 (PG).

It belongs to the metallo-dependent hydrolases superfamily. DHOase family. Class I DHOase subfamily. The cofactor is Zn(2+).

The catalysed reaction is (S)-dihydroorotate + H2O = N-carbamoyl-L-aspartate + H(+). It participates in pyrimidine metabolism; UMP biosynthesis via de novo pathway; (S)-dihydroorotate from bicarbonate: step 3/3. Functionally, catalyzes the reversible cyclization of carbamoyl aspartate to dihydroorotate. The sequence is that of Dihydroorotase from Sulfolobus acidocaldarius (strain ATCC 33909 / DSM 639 / JCM 8929 / NBRC 15157 / NCIMB 11770).